The following is a 295-amino-acid chain: Ribosomal RNA small subunit methyltransferase H (295 aa).

S-adenosyl-L-methionine contacts are provided by residues 35-37 (GGH), glutamate 55, phenylalanine 82, aspartate 103, and glutamine 110.

The protein belongs to the methyltransferase superfamily. RsmH family.

Its subcellular location is the cytoplasm. It catalyses the reaction cytidine(1402) in 16S rRNA + S-adenosyl-L-methionine = N(4)-methylcytidine(1402) in 16S rRNA + S-adenosyl-L-homocysteine + H(+). Its function is as follows. Specifically methylates the N4 position of cytidine in position 1402 (C1402) of 16S rRNA. This Desulfotalea psychrophila (strain LSv54 / DSM 12343) protein is Ribosomal RNA small subunit methyltransferase H.